Consider the following 229-residue polypeptide: Large ribosomal subunit protein uL1 (229 aa).

Belongs to the universal ribosomal protein uL1 family. Part of the 50S ribosomal subunit.

Binds directly to 23S rRNA. The L1 stalk is quite mobile in the ribosome, and is involved in E site tRNA release. Its function is as follows. Protein L1 is also a translational repressor protein, it controls the translation of the L11 operon by binding to its mRNA. The chain is Large ribosomal subunit protein uL1 from Haemophilus influenzae (strain PittEE).